Reading from the N-terminus, the 168-residue chain is CASP-like protein 4D1 (168 aa).

Over 1-11 (MAPPPPSLASR) the chain is Cytoplasmic. Residues 12–32 (MAALILRILTFIFLIASLVIL) traverse the membrane as a helical segment. Topologically, residues 33–57 (TTNTATLELDLVEVKVHFKDVYAYR) are extracellular. Residues 58–78 (YMLATIVIGLAYTVLQIAFTL) traverse the membrane as a helical segment. Over 79–97 (YYVATGNRMMSGDGNLAFD) the chain is Cytoplasmic. The helical transmembrane segment at 98–118 (FFGDKVISYILVTGAAAGFAS) threads the bilayer. At 119-144 (TKDIKPVFSGSGDFDAFINKGYASAS) the chain is on the extracellular side. The chain crosses the membrane as a helical span at residues 145–165 (LLLIGFVCTAVLSVFSSYALP). The Cytoplasmic portion of the chain corresponds to 166–168 (KQV).

This sequence belongs to the Casparian strip membrane proteins (CASP) family. As to quaternary structure, homodimer and heterodimers.

It is found in the cell membrane. This is CASP-like protein 4D1 from Ricinus communis (Castor bean).